Here is a 225-residue protein sequence, read N- to C-terminus: MKLQFFSFITLFACLFTTAIFAKEDTAEDPEITHKVYFDINHGDKQIGRIVMGLYGLTTPQTVENFYQLTISRDPKMGYLNSIFHRVIPNFMIQGGDFTHRSGIGGKSIFGNTFKDENFDVKHDKPGRLSMANRGKNTNGSQFFITTVPCPWLDGKHVVFGEVLDGMDVVHYIENVKTDSRNMPVKEVIIVESGELETVPLDNKDAAKLQEEIKAEASEAAHDEL.

An N-terminal signal peptide occupies residues 1–22 (MKLQFFSFITLFACLFTTAIFA). A PPIase cyclophilin-type domain is found at 37 to 195 (YFDINHGDKQ…KEVIIVESGE (159 aa)). An N-linked (GlcNAc...) asparagine glycan is attached at asparagine 139. A Prevents secretion from ER motif is present at residues 222 to 225 (HDEL).

Belongs to the cyclophilin-type PPIase family. PPIase B subfamily.

It is found in the endoplasmic reticulum lumen. It catalyses the reaction [protein]-peptidylproline (omega=180) = [protein]-peptidylproline (omega=0). Functionally, PPIases accelerate the folding of proteins. It catalyzes the cis-trans isomerization of proline imidic peptide bonds in oligopeptides. The protein is Peptidyl-prolyl cis-trans isomerase D of Saccharomyces cerevisiae (strain ATCC 204508 / S288c) (Baker's yeast).